A 152-amino-acid polypeptide reads, in one-letter code: Aminoglycoside N(6')-acetyltransferase type 1 (152 aa).

In terms of domain architecture, N-acetyltransferase spans Pro-5 to Leu-152. Substrate is bound by residues Trp-26, Tyr-73, Glu-86, and Asp-122. Asn-127 contributes to the acetyl-CoA binding site.

In terms of assembly, homodimer.

It carries out the reaction kanamycin B + acetyl-CoA = N(6')-acetylkanamycin B + CoA + H(+). Catalyzes the transfer of an acetyl group from acetyl-CoA to the 6'-amino group of aminoglycoside molecules conferring resistance to antibiotics containing the purpurosamine ring including amikacin. In Klebsiella aerogenes (Enterobacter aerogenes), this protein is Aminoglycoside N(6')-acetyltransferase type 1 (aacA7).